The primary structure comprises 270 residues: uncharacterized protein (270 aa).

10 consecutive transmembrane segments (helical) span residues 12–32 (AAIVLSAVLMGTVSVFVRNVG), 35–55 (TLSVTFLRLFFGFLAVLPFCL), 64–84 (TLLGLAVFNFLTVASYIAAIQ), 88–108 (VAMAALLLYMAPVYVIPLSVL), 117–137 (TLLALPLGLIGLYLMLTPYAE), 138–158 (LTFGIIFGIVSGLSYAIVFVL), 171–191 (ITFYNLGLGSAALLPYFLMFG), 194–214 (GSWLWAIGLGVVPTAVPFVLF), 226–246 (APILALIEPLCAGLVGYFYFG), and 248–268 (TLTLTQLIGGAMILAGVLIAW). 2 consecutive EamA domains span residues 19 to 133 (VLMG…LMLT) and 150 to 269 (LSYA…IAWR).

The protein belongs to the EamA transporter family.

It is found in the cell membrane. This is an uncharacterized protein from Archaeoglobus fulgidus (strain ATCC 49558 / DSM 4304 / JCM 9628 / NBRC 100126 / VC-16).